We begin with the raw amino-acid sequence, 197 residues long: Imidazoleglycerol-phosphate dehydratase (197 aa).

This sequence belongs to the imidazoleglycerol-phosphate dehydratase family.

It is found in the cytoplasm. The catalysed reaction is D-erythro-1-(imidazol-4-yl)glycerol 3-phosphate = 3-(imidazol-4-yl)-2-oxopropyl phosphate + H2O. Its pathway is amino-acid biosynthesis; L-histidine biosynthesis; L-histidine from 5-phospho-alpha-D-ribose 1-diphosphate: step 6/9. This Syntrophomonas wolfei subsp. wolfei (strain DSM 2245B / Goettingen) protein is Imidazoleglycerol-phosphate dehydratase.